A 285-amino-acid polypeptide reads, in one-letter code: Diphthine methyl ester synthase (285 aa).

Residues leucine 9, aspartate 84, glycine 87, 112 to 113 (SI), leucine 163, valine 221, and histidine 246 each bind S-adenosyl-L-methionine.

Belongs to the diphthine synthase family.

The protein localises to the cytoplasm. It catalyses the reaction 2-[(3S)-amino-3-carboxypropyl]-L-histidyl-[translation elongation factor 2] + 4 S-adenosyl-L-methionine = diphthine methyl ester-[translation elongation factor 2] + 4 S-adenosyl-L-homocysteine + 3 H(+). It participates in protein modification; peptidyl-diphthamide biosynthesis. Its function is as follows. S-adenosyl-L-methionine-dependent methyltransferase that catalyzes four methylations of the modified target histidine residue in translation elongation factor 2 (EF-2), to form an intermediate called diphthine methyl ester. The four successive methylation reactions represent the second step of diphthamide biosynthesis. This chain is Diphthine methyl ester synthase (dph5), found in Emericella nidulans (strain FGSC A4 / ATCC 38163 / CBS 112.46 / NRRL 194 / M139) (Aspergillus nidulans).